A 481-amino-acid polypeptide reads, in one-letter code: 6-phosphogluconate dehydrogenase, decarboxylating (481 aa).

Residues 11–16 (GLAVMG), 34–36 (NRT), 76–78 (VKG), and N104 contribute to the NADP(+) site. Residues N104 and 130–132 (SGG) contribute to the substrate site. The active-site Proton acceptor is the K184. 187–188 (HN) lines the substrate pocket. Residue E191 is the Proton donor of the active site. Substrate contacts are provided by Y192, K259, R286, R445, and H451.

This sequence belongs to the 6-phosphogluconate dehydrogenase family. In terms of assembly, homodimer.

The catalysed reaction is 6-phospho-D-gluconate + NADP(+) = D-ribulose 5-phosphate + CO2 + NADPH. The protein operates within carbohydrate degradation; pentose phosphate pathway; D-ribulose 5-phosphate from D-glucose 6-phosphate (oxidative stage): step 3/3. In terms of biological role, catalyzes the oxidative decarboxylation of 6-phosphogluconate to ribulose 5-phosphate and CO(2), with concomitant reduction of NADP to NADPH. The sequence is that of 6-phosphogluconate dehydrogenase, decarboxylating (Pgd) from Drosophila simulans (Fruit fly).